A 446-amino-acid polypeptide reads, in one-letter code: Histidine--tRNA ligase (446 aa).

The protein belongs to the class-II aminoacyl-tRNA synthetase family. In terms of assembly, homodimer.

The protein resides in the cytoplasm. The catalysed reaction is tRNA(His) + L-histidine + ATP = L-histidyl-tRNA(His) + AMP + diphosphate + H(+). The polypeptide is Histidine--tRNA ligase (Burkholderia pseudomallei (strain K96243)).